A 373-amino-acid polypeptide reads, in one-letter code: Glutamate 5-kinase (373 aa).

Position 16 (lysine 16) interacts with ATP. The substrate site is built by serine 56, aspartate 143, and asparagine 155. An ATP-binding site is contributed by 175–176; sequence TD. In terms of domain architecture, PUA spans 281-359; sequence RGVVTLDDGA…TKIETLLGYK (79 aa).

It belongs to the glutamate 5-kinase family.

The protein localises to the cytoplasm. The enzyme catalyses L-glutamate + ATP = L-glutamyl 5-phosphate + ADP. It functions in the pathway amino-acid biosynthesis; L-proline biosynthesis; L-glutamate 5-semialdehyde from L-glutamate: step 1/2. In terms of biological role, catalyzes the transfer of a phosphate group to glutamate to form L-glutamate 5-phosphate. The polypeptide is Glutamate 5-kinase (Teredinibacter turnerae (strain ATCC 39867 / T7901)).